We begin with the raw amino-acid sequence, 497 residues long: Probable FAD-binding monooxygenase AlmA (497 aa).

A helical membrane pass occupies residues 4-24 (QVDVLIIGAGISGIGLAVHLS). Positions 15, 36, 56, 62, and 104 each coordinate FAD. Residue 54–56 (RSD) coordinates NADP(+). NADP(+)-binding positions include 184–190 (SGATAIT), 208–209 (RS), and 292–293 (RL). V395 is an FAD binding site.

The protein belongs to the FAD-binding monooxygenase family. FAD serves as cofactor.

Its subcellular location is the cell membrane. It functions in the pathway hydrocarbon metabolism; alkane degradation. Functionally, is involved in the degradation of n-alkanes with C chain lengths of 32 and longer. Allows Acinetobacter sp. strain DSM 17874 to grow on long-chain n-alkanes such as dotriacontane (C32H66) or hexatriacontane (C36H74) as a sole carbon source. This chain is Probable FAD-binding monooxygenase AlmA, found in Acinetobacter sp.